Reading from the N-terminus, the 254-residue chain is Alcohol dehydrogenase 2 (254 aa).

10–33 (FVAGLGGIGLDTSREIVKSGPKNL) is a binding site for NAD(+). S138 is a substrate binding site. The Proton acceptor role is filled by Y151.

This sequence belongs to the short-chain dehydrogenases/reductases (SDR) family. As to quaternary structure, homodimer.

It carries out the reaction a primary alcohol + NAD(+) = an aldehyde + NADH + H(+). The enzyme catalyses a secondary alcohol + NAD(+) = a ketone + NADH + H(+). In Drosophila hydei (Fruit fly), this protein is Alcohol dehydrogenase 2 (Adh2).